Consider the following 774-residue polypeptide: Beta-xylosidase/alpha-L-arabinofuranosidase 1 (774 aa).

The first 33 residues, 1–33 (ANTKNREPKVSSVFLCFSIFYVTVLLNCNHVYG), serve as a signal peptide directing secretion. N-linked (GlcNAc...) asparagine glycosylation is found at asparagine 48 and asparagine 136. Aspartate 303 is an active-site residue. 2 N-linked (GlcNAc...) asparagine glycosylation sites follow: asparagine 437 and asparagine 530.

It belongs to the glycoside hydrolase 3 family. Proteolytically cleaved in roots to form a 65 kDa protein.

Its subcellular location is the secreted. It localises to the extracellular space. The protein localises to the extracellular matrix. It catalyses the reaction Hydrolysis of (1-&gt;4)-beta-D-xylans, to remove successive D-xylose residues from the non-reducing termini.. The catalysed reaction is Hydrolysis of terminal non-reducing alpha-L-arabinofuranoside residues in alpha-L-arabinosides.. A bifunctional beta-xylosidase/alpha-L-arabinosidase, exo-enzyme that acts synergistically with endohydrolases. Releases xylose and arabinose from cell walls. Does not cleave xylan from oat spelts although xylan from oat spelts was degraded to xylose when this enzyme was used in combination with xylanase. Also releases xylose and arabinose from aryl glycosides, xylo-oligosaccharides, arabinan from sugar beet and arabino-oligosaccharides, arabinan from sugar beet and arabinoxylan from wheat. This Medicago sativa subsp. varia (Alfalfa) protein is Beta-xylosidase/alpha-L-arabinofuranosidase 1.